The sequence spans 592 residues: Endoribonuclease Arlr (592 aa).

The N-terminal stretch at Met1–Ala24 is a signal peptide. Residues Pro83–Thr329 form a disordered region. Residues Pro109 to Pro120 are compositionally biased toward polar residues. Low complexity-rich tracts occupy residues Pro134–Ser144 and Gly188–Thr209. Pro residues-rich tracts occupy residues Leu234–Gly249 and Leu258–Pro267. Residues Pro268–Ala294 show a composition bias toward low complexity. One can recognise an EndoU domain in the interval Thr329–Ile592. Active-site residues include His473, His488, and Lys531.

It belongs to the ENDOU family. In terms of assembly, monomer. Requires Mn(2+) as cofactor. As to expression, predominantly expressed in head. Expressed in fat body cells.

The protein resides in the endoplasmic reticulum lumen. It is found in the secreted. The enzyme catalyses a ribonucleotidyl-ribonucleotide-RNA + H2O = a 3'-end 3'-phospho-ribonucleotide-RNA + a 5'-end dephospho-ribonucleoside-RNA + H(+). Endoribonuclease that cleaves single-stranded RNAs; unlike its paralog EndoU it does not appear to preferentially cleave at uridylates and releases linear products instead of products that have 2'-3'-cyclic phosphate termini. Preferentially cleaves single stranded RNA at sites with AU, UC and poly-U sites cleaved less efficiently. Targets mRNAs encoding proteins involved in lipid metabolism, particularly those involved in lipolysis, to regulate their expression. This Drosophila melanogaster (Fruit fly) protein is Endoribonuclease Arlr.